The sequence spans 612 residues: FAD-linked oxidoreductase easE (612 aa).

Residues 129–313 enclose the FAD-binding PCMH-type domain; the sequence is HQGRIPLYSA…TRATMRVFPD (185 aa).

The protein belongs to the oxygen-dependent FAD-linked oxidoreductase family. The cofactor is FAD.

It functions in the pathway alkaloid biosynthesis; ergot alkaloid biosynthesis. Its function is as follows. FAD-linked oxidoreductase; part of the gene cluster that mediates the biosynthesis of fungal ergot alkaloid. DmaW catalyzes the first step of ergot alkaloid biosynthesis by condensing dimethylallyl diphosphate (DMAP) and tryptophan to form 4-dimethylallyl-L-tryptophan. The second step is catalyzed by the methyltransferase easF that methylates 4-dimethylallyl-L-tryptophan in the presence of S-adenosyl-L-methionine, resulting in the formation of 4-dimethylallyl-L-abrine. The catalase easC and the FAD-dependent oxidoreductase easE then transform 4-dimethylallyl-L-abrine to chanoclavine-I which is further oxidized by easD in the presence of NAD(+), resulting in the formation of chanoclavine-I aldehyde. Chanoclavine-I aldehyde is the precursor of ergoamides and ergopeptines in Clavicipitaceae, and clavine-type alcaloids such as fumiclavine in Trichocomaceae. However, the metabolites downstream of chanoclavine-I aldehyde in Arthrodermataceae have not been identified yet. The protein is FAD-linked oxidoreductase easE of Arthroderma otae (strain ATCC MYA-4605 / CBS 113480) (Microsporum canis).